Consider the following 141-residue polypeptide: Hemoglobin subunit alpha-A (141 aa).

In terms of domain architecture, Globin spans 1–141; it reads VLSGPDKTNV…VGAVLTAKYR (141 aa). His58 is an O2 binding site. His87 is a binding site for heme b.

The protein belongs to the globin family. As to quaternary structure, heterotetramer of two alpha chains and two beta chains. In terms of tissue distribution, red blood cells.

Its function is as follows. Involved in oxygen transport from the lung to the various peripheral tissues. The chain is Hemoglobin subunit alpha-A (HBAA) from Rhea americana (Greater rhea).